The following is an 811-amino-acid chain: G-type lectin S-receptor-like serine/threonine-protein kinase LECRK3 (811 aa).

Positions 1-23 (MAHLLFLPILQLLLLYCTKSAQA) are cleaved as a signal peptide. Positions 24-153 (QLNISIGSSL…DGATKWESFG (130 aa)) constitute a Bulb-type lectin domain. The Extracellular segment spans residues 24–464 (QLNISIGSSL…DKKYWILGSS (441 aa)). N-linked (GlcNAc...) asparagine glycosylation is found at asparagine 26, asparagine 39, asparagine 59, asparagine 219, asparagine 226, asparagine 237, and asparagine 242. The region spanning 292–344 (PENICQSIQTMVGSGACGFNSYCTIDGTKNTTSCLCPQNYKFIDDKRKYKGCR) is the EGF-like; atypical domain. 5 disulfide bridges follow: cysteine 296-cysteine 314, cysteine 308-cysteine 325, cysteine 327-cysteine 343, cysteine 389-cysteine 411, and cysteine 393-cysteine 399. Asparagine 321 is a glycosylation site (N-linked (GlcNAc...) asparagine). The region spanning 352–430 (CDLDETTAML…GKMDVNVPRT (79 aa)) is the PAN domain. Residues 465 to 485 (LLFGSSVLVNFLLISVMLFGT) traverse the membrane as a helical segment. Over 486 to 811 (YCSITSRKKI…DPSSYISSLA (326 aa)) the chain is Cytoplasmic. Residues 521–795 (GGFQEVLGTG…KVTQMLDGAV (275 aa)) enclose the Protein kinase domain. Residues 527–535 (LGTGASGVV) and lysine 551 each bind ATP. The active-site Proton acceptor is the aspartate 645.

It belongs to the protein kinase superfamily. Ser/Thr protein kinase family.

It is found in the membrane. It catalyses the reaction L-seryl-[protein] + ATP = O-phospho-L-seryl-[protein] + ADP + H(+). It carries out the reaction L-threonyl-[protein] + ATP = O-phospho-L-threonyl-[protein] + ADP + H(+). Functionally, involved in resistance against the herbivorous insect brown planthopper (N.lugens, BPH). Member of the BPH3 (BPH resistance locus 3) cluster which contains LECRK1, LECRK2 and LECRK3. This Oryza sativa subsp. indica (Rice) protein is G-type lectin S-receptor-like serine/threonine-protein kinase LECRK3.